We begin with the raw amino-acid sequence, 457 residues long: Aromatic amino acid transport protein AroP (457 aa).

The Cytoplasmic portion of the chain corresponds to 1-18 (MMEGQQHGEQLKRGLKNR). The chain crosses the membrane as a helical span at residues 19-39 (HIQLIALGGAIGTGLFLGSAS). Topologically, residues 40-42 (VIQ) are periplasmic. Residues 43–63 (SAGPGIILGYAIAGFIAFLIM) form a helical membrane-spanning segment. Topologically, residues 64–98 (RQLGEMVVEEPVAGSFSHFAYKYWGSFAGFASGWN) are cytoplasmic. Residues 99–119 (YWVLYVLVAMAELTAVGKYIQ) form a helical membrane-spanning segment. The Periplasmic portion of the chain corresponds to 120 to 124 (FWYPE). The helical transmembrane segment at 125–145 (IPTWVSAAVFFVVINAINLTN) threads the bilayer. The Cytoplasmic portion of the chain corresponds to 146–147 (VK). A helical transmembrane segment spans residues 148 to 168 (VFGEMEFWFAIIKVIAVVAMI). Residues 169–192 (IFGGWLLFSGNGGPQATVSNLWDQ) lie on the Periplasmic side of the membrane. The helical transmembrane segment at 193–213 (GGFLPHGFTGLVMMMAIIMFS) threads the bilayer. The Cytoplasmic segment spans residues 214 to 239 (FGGLELVGITAAEADNPEQSIPKATN). Residues 240–260 (QVIYRILIFYIGSLAVLLSLM) form a helical membrane-spanning segment. Over 261–279 (PWTRVTADTSPFVLIFHEL) the chain is Periplasmic. The chain crosses the membrane as a helical span at residues 280 to 300 (GDTFVANALNIVVLTAALSVY). Over 301–330 (NSCVYCNSRMLFGLAQQGNAPKALASVDKR) the chain is Cytoplasmic. A helical transmembrane segment spans residues 331–351 (GVPVNTILVSALVTALCVLIN). Topologically, residues 352-359 (YLAPESAF) are periplasmic. The chain crosses the membrane as a helical span at residues 360–380 (GLLMALVVSALVINWAMISLA). Residues 381–402 (HMKFRRAKQEQGVVTRFPALLY) are Cytoplasmic-facing. Residues 403–423 (PLGNWICLLFMAAVLVIMLMT) traverse the membrane as a helical segment. Over 424–426 (PGM) the chain is Periplasmic. Residues 427–447 (AISVYLIPVWLIVLGIGYLFK) form a helical membrane-spanning segment. Residues 448-457 (EKTAKAVKAH) lie on the Cytoplasmic side of the membrane.

The protein belongs to the amino acid-polyamine-organocation (APC) superfamily. Amino acid transporter (AAT) (TC 2.A.3.1) family.

It is found in the cell inner membrane. It catalyses the reaction L-phenylalanine(in) + H(+)(in) = L-phenylalanine(out) + H(+)(out). The enzyme catalyses L-tryptophan(in) + H(+)(in) = L-tryptophan(out) + H(+)(out). It carries out the reaction L-tyrosine(in) + H(+)(in) = L-tyrosine(out) + H(+)(out). Strong, mutual inhibition of uptake by tyrosine, phenylalanine, and tryptophan. Transport is also inhibited by the aromatic analogs p-fluorophenylalanine, beta-2-thienylalanine and 5-methyltryptophan. Functionally, permease that is involved in the active transport across the cytoplasmic membrane of all three aromatic amino acids, phenylalanine, tyrosine and tryptophan. This Escherichia coli (strain K12) protein is Aromatic amino acid transport protein AroP.